The chain runs to 503 residues: Aminoaldehyde dehydrogenase 2, peroxisomal (503 aa).

Residues Ile28, Asp99, and Leu189 each coordinate Na(+). Position 238–245 (238–245 (GSTMTGSK)) interacts with NAD(+). Glu260 acts as the Proton acceptor in catalysis. NAD(+)-binding residues include Cys294 and Glu393. The Nucleophile role is filled by Cys294. The short motif at 501-503 (SKL) is the Microbody targeting signal element.

This sequence belongs to the aldehyde dehydrogenase family. In terms of tissue distribution, expressed in leaves, flowers and fruits.

It localises to the peroxisome. It catalyses the reaction 4-aminobutanal + NAD(+) + H2O = 4-aminobutanoate + NADH + 2 H(+). It carries out the reaction 3-aminopropanal + NAD(+) + H2O = beta-alanine + NADH + 2 H(+). It participates in amine and polyamine biosynthesis; betaine biosynthesis via choline pathway; betaine from betaine aldehyde: step 1/1. In terms of biological role, dehydrogenase that catalyzes the oxidation of several aminoaldehydes. Metabolizes and detoxifies aldehyde products of polyamine degradation to non-toxic amino acids. Catalyzes the oxidation of 4-aminobutanal and 3-aminopropanal to 4-aminobutanoate and beta-alanine, respectively. The polypeptide is Aminoaldehyde dehydrogenase 2, peroxisomal (Malus domestica (Apple)).